Reading from the N-terminus, the 197-residue chain is MIEFVRGEVAYVCAEFVTIEVGGIGYKIVAPNPFFYRTGDEQVIVYTYHYVREDQEVLFGFRSRRERALFTKLLGVTGIGPKGSLAIVASGDVDALVEAIEQEKESYLIKFPGVGKKTAKQMTLDLKGKLAELAPDYIPSEGLFAQGNAELNEACEALTALGYSEREVEKVKKALQGEVLSTDQYVKRALQLLLNVR.

The domain I stretch occupies residues 1–62 (MIEFVRGEVA…EDQEVLFGFR (62 aa)). The domain II stretch occupies residues 63–141 (SRRERALFTK…ELAPDYIPSE (79 aa)). The segment at 141 to 145 (EGLFA) is flexible linker. The domain III stretch occupies residues 146-197 (QGNAELNEACEALTALGYSEREVEKVKKALQGEVLSTDQYVKRALQLLLNVR).

The protein belongs to the RuvA family. As to quaternary structure, homotetramer. Forms an RuvA(8)-RuvB(12)-Holliday junction (HJ) complex. HJ DNA is sandwiched between 2 RuvA tetramers; dsDNA enters through RuvA and exits via RuvB. An RuvB hexamer assembles on each DNA strand where it exits the tetramer. Each RuvB hexamer is contacted by two RuvA subunits (via domain III) on 2 adjacent RuvB subunits; this complex drives branch migration. In the full resolvosome a probable DNA-RuvA(4)-RuvB(12)-RuvC(2) complex forms which resolves the HJ.

The protein localises to the cytoplasm. The RuvA-RuvB-RuvC complex processes Holliday junction (HJ) DNA during genetic recombination and DNA repair, while the RuvA-RuvB complex plays an important role in the rescue of blocked DNA replication forks via replication fork reversal (RFR). RuvA specifically binds to HJ cruciform DNA, conferring on it an open structure. The RuvB hexamer acts as an ATP-dependent pump, pulling dsDNA into and through the RuvAB complex. HJ branch migration allows RuvC to scan DNA until it finds its consensus sequence, where it cleaves and resolves the cruciform DNA. The chain is Holliday junction branch migration complex subunit RuvA from Exiguobacterium sibiricum (strain DSM 17290 / CCUG 55495 / CIP 109462 / JCM 13490 / 255-15).